A 115-amino-acid polypeptide reads, in one-letter code: Peptidyl-tRNA hydrolase (115 aa).

The protein belongs to the PTH2 family.

The protein resides in the cytoplasm. The catalysed reaction is an N-acyl-L-alpha-aminoacyl-tRNA + H2O = an N-acyl-L-amino acid + a tRNA + H(+). Its function is as follows. The natural substrate for this enzyme may be peptidyl-tRNAs which drop off the ribosome during protein synthesis. This is Peptidyl-tRNA hydrolase (pth) from Nanoarchaeum equitans (strain Kin4-M).